The sequence spans 160 residues: Cytochrome b6-f complex subunit 4 (160 aa).

Transmembrane regions (helical) follow at residues 36–56 (LLYI…GLGV), 95–115 (LLGV…PFIE), and 131–151 (LVFL…TMPI).

Belongs to the cytochrome b family. PetD subfamily. The 4 large subunits of the cytochrome b6-f complex are cytochrome b6, subunit IV (17 kDa polypeptide, petD), cytochrome f and the Rieske protein, while the 4 small subunits are petG, petL, petM and petN. The complex functions as a dimer.

It is found in the plastid. The protein resides in the chloroplast thylakoid membrane. Component of the cytochrome b6-f complex, which mediates electron transfer between photosystem II (PSII) and photosystem I (PSI), cyclic electron flow around PSI, and state transitions. The polypeptide is Cytochrome b6-f complex subunit 4 (Emiliania huxleyi (Coccolithophore)).